We begin with the raw amino-acid sequence, 823 residues long: Hypoxia-inducible factor 1-alpha (823 aa).

Positions 1 to 30 are disordered; that stretch reads MEGAGGANDKKKISSERRKEKSRDAARSRR. Positions 1 to 401 are interaction with TSGA10; sequence MEGAGGANDK…KEPDALTLLA (401 aa). Basic and acidic residues predominate over residues 8–30; that stretch reads NDKKKISSERRKEKSRDAARSRR. The 54-residue stretch at 17-70 folds into the bHLH domain; it reads RRKEKSRDAARSRRSKESEVFYELAHQLPLPHNVSSHLDKASVMRLTISYLRVR. Positions 21-30 are DNA-binding; it reads KSRDAARSRR. Residues 85–158 form the PAS 1 domain; sequence KAQMNCFYLK…THRNGLVKKG (74 aa). Residues 170–191 form a required for heterodimer formation with ARNT region; it reads RMKCTLTSRGRTMNIKSATWKV. Positions 228–298 constitute a PAS 2 domain; sequence PHPSNIEIPL…KTHHDMFTKG (71 aa). Phosphoserine; by CK1 is present on Ser247. The PAC domain maps to 302–345; it reads TGQYRMLAKRGGYVWIETQATVIYNTKNSQPQCIVCVNYVVSGI. The segment at 401–600 is ODD; that stretch reads APAAGDTIIS…QSASTNTVFQ (200 aa). The residue at position 402 (Pro402) is a 4-hydroxyproline. Residues 494-517 are compositionally biased toward polar residues; it reads IQDQPASPSDGSTRQSSPEPNSPS. The segment at 494–521 is disordered; that stretch reads IQDQPASPSDGSTRQSSPEPNSPSEYCF. Residues 531–575 are NTAD; sequence FKLELVEKLFAEDTEAKNPFSTQDTDLDLEMLAPYIPMDDDFQLR. The residue at position 532 (Lys532) is an N6-acetyllysine; alternate. Residue Lys532 forms a Glycyl lysine isopeptide (Lys-Gly) (interchain with G-Cter in ubiquitin); alternate linkage. Residues Lys538 and Lys547 each participate in a glycyl lysine isopeptide (Lys-Gly) (interchain with G-Cter in ubiquitin) cross-link. Residue Ser551 is modified to Phosphoserine; by GSK3-beta. Thr555 is subject to Phosphothreonine; by GSK3-beta. A 4-hydroxyproline modification is found at Pro564. At Ser576 the chain carries Phosphoserine; by PLK3. Residues 576 to 782 form an ID region; that stretch reads SFDQLSPLEN…SDLACRLLGQ (207 aa). Disordered regions lie at residues 581 to 602 and 639 to 685; these read SPLE…FQPT and PSPP…PRSP. At Ser589 the chain carries Phosphoserine; by GSK3-beta. The segment covering 651–666 has biased composition (polar residues); sequence ATTSPYSDTGSRTASP. A Phosphoserine; by PLK3 modification is found at Ser654. The residue at position 706 (Lys706) is an N6-acetyllysine. The short motif at 715 to 721 is the Nuclear localization signal element; that stretch reads RKRKIEH. The segment at 783 to 823 is CTAD; it reads SMDESGLPQLTSYDCEVNAPIQGSRNLLQGEELLRALDQVN. Cys797 carries the post-translational modification S-nitrosocysteine. A (3S)-3-hydroxyasparagine modification is found at Asn800.

Interacts with the ARNT; forms a heterodimer that binds core DNA sequence 5'-TACGTG-3' within the hypoxia response element (HRE) of target gene promoters. Interacts with COPS5; the interaction increases the transcriptional activity of HIF1A through increased stability. Interacts with EP300 (via TAZ-type 1 domains); the interaction is stimulated in response to hypoxia and inhibited by CITED2. Interacts with CREBBP (via TAZ-type 1 domains). Interacts with NCOA1, NCOA2, APEX1 and HSP90. Interacts (hydroxylated within the ODD domain) with VHLL (via beta domain); the interaction, leads to polyubiquitination and subsequent HIF1A proteasomal degradation. During hypoxia, sumoylated HIF1A also binds VHL; the interaction promotes the ubiquitination of HIF1A. Interacts with SENP1; the interaction desumoylates HIF1A resulting in stabilization and activation of transcription. Interacts (via the ODD domain) with NAA10; the interaction appears not to acetylate HIF1A nor have any affect on protein stability, during hypoxia. Interacts with RWDD3; the interaction enhances HIF1A sumoylation. Interacts with TSGA10. Interacts with HIF3A. Interacts with RORA (via the DNA binding domain); the interaction enhances HIF1A transcription under hypoxia through increasing protein stability. Interaction with PSMA7 inhibits the transactivation activity of HIF1A under both normoxic and hypoxia-mimicking conditions. Interacts with USP20. Interacts with RACK1; promotes HIF1A ubiquitination and proteasome-mediated degradation. Interacts (via N-terminus) with USP19. Interacts with SIRT2. Interacts (deacetylated form) with EGLN1. Interacts with CBFA2T3. Interacts with HSP90AA1 and HSP90AB1. Interacts with DCUN1D1; this interaction increases the interaction between VHL and DCUN1D1. Interacts with HIF1AN. S-nitrosylation of Cys-797 may be responsible for increased recruitment of p300 coactivator necessary for transcriptional activity of HIF-1 complex. In terms of processing, acetylation of Lys-532 by ARD1 increases interaction with VHL and stimulates subsequent proteasomal degradation. Deacetylation of Lys-706 by SIRT2 increases its interaction with and hydroxylation by EGLN1 thereby inactivating HIF1A activity by inducing its proteasomal degradation. Post-translationally, ubiquitinated; in normoxia, following hydroxylation and interaction with VHL. Lys-532 appears to be the principal site of ubiquitination. Clioquinol, the Cu/Zn-chelator, inhibits ubiquitination through preventing hydroxylation at Asn-800. Ubiquitinated by E3 ligase VHL. Deubiquitinated by UCHL1. Requires phosphorylation for DNA-binding. Phosphorylation at Ser-247 by CSNK1D/CK1 represses kinase activity and impairs ARNT binding. Phosphorylation by GSK3-beta and PLK3 promote degradation by the proteasome. In terms of processing, the iron and 2-oxoglutarate dependent 3-hydroxylation of asparagine is (S) stereospecific within HIF CTAD domains. Post-translationally, sumoylated; with SUMO1 under hypoxia. Sumoylation is enhanced through interaction with RWDD3. Both sumoylation and desumoylation seem to be involved in the regulation of its stability during hypoxia. Sumoylation can promote either its stabilization or its VHL-dependent degradation by promoting hydroxyproline-independent HIF1A-VHL complex binding, thus leading to HIF1A ubiquitination and proteasomal degradation. Desumoylation by SENP1 increases its stability amd transcriptional activity. There is a disaccord between various publications on the effect of sumoylation and desumoylation on its stability and transcriptional activity. In normoxia, is hydroxylated on Pro-402 and Pro-564 in the oxygen-dependent degradation domain (ODD) by EGLN1/PHD2 and EGLN2/PHD1. EGLN3/PHD3 has also been shown to hydroxylate Pro-564. The hydroxylated prolines promote interaction with VHL, initiating rapid ubiquitination and subsequent proteasomal degradation. Deubiquitinated by USP20. Under hypoxia, proline hydroxylation is impaired and ubiquitination is attenuated, resulting in stabilization. In normoxia, is hydroxylated on Asn-800 by HIF1AN, thus abrogating interaction with CREBBP and EP300 and preventing transcriptional activation. Repressed by iron ion, via Fe(2+) prolyl hydroxylase (PHD) enzymes-mediated hydroxylation and subsequent proteasomal degradation.

It localises to the cytoplasm. Its subcellular location is the nucleus. Its activity is regulated as follows. Induced by reactive oxygen species (ROS). Functions as a master transcriptional regulator of the adaptive response to hypoxia. Under hypoxic conditions, activates the transcription of over 40 genes, including erythropoietin, glucose transporters, glycolytic enzymes, vascular endothelial growth factor, HILPDA, and other genes whose protein products increase oxygen delivery or facilitate metabolic adaptation to hypoxia. Plays an essential role in embryonic vascularization, tumor angiogenesis and pathophysiology of ischemic disease. Heterodimerizes with ARNT; heterodimer binds to core DNA sequence 5'-TACGTG-3' within the hypoxia response element (HRE) of target gene promoters. Activation requires recruitment of transcriptional coactivators such as CREBBP and EP300. Activity is enhanced by interaction with NCOA1 and/or NCOA2. Interaction with redox regulatory protein APEX1 seems to activate CTAD and potentiates activation by NCOA1 and CREBBP. Involved in the axonal distribution and transport of mitochondria in neurons during hypoxia. This chain is Hypoxia-inducible factor 1-alpha (HIF1A), found in Bos taurus (Bovine).